The primary structure comprises 80 residues: Protein P9 (80 aa).

As to quaternary structure, self-associates.

In Beta vulgaris (Sugar beet), this protein is Protein P9.